The following is a 332-amino-acid chain: MKFELDEKRRVVRIVPEREEDLYFIYLLIDRGDIVRGWTVREYKPEGAKEGERVKMYLGISVEKIEYHKFRSSLRVRGTVVEVQEEVEGVKGRRHTFEIVPGREVVVEKRRGSVEVVKRILDMANVALPRILLVSIDDEEAALAYISALGAEIMYTVPNQVNRGKRGESLLEDFFKSVNTLVEEVKRLRKIDRVVLAGPGMVVDQAGRYIRGERVVQSSGGVAGVYEFLRSGLYDKLKEELGLEAYSRLQKMLASQRDLVALGVEEVKEAVSIGRAETVLILDTYMKEKPDEAWEILSQVYNTGGKVYIVREDTEVGAAIRAMGNIVALLRW.

It belongs to the eukaryotic release factor 1 family. Pelota subfamily. In terms of assembly, monomer. A divalent metal cation serves as cofactor.

The protein resides in the cytoplasm. Functionally, may function in recognizing stalled ribosomes, interact with stem-loop structures in stalled mRNA molecules, and effect endonucleolytic cleavage of the mRNA. May play a role in the release non-functional ribosomes and degradation of damaged mRNAs. Has endoribonuclease activity. The polypeptide is Protein pelota homolog (Pyrobaculum calidifontis (strain DSM 21063 / JCM 11548 / VA1)).